Reading from the N-terminus, the 820-residue chain is Breast cancer anti-estrogen resistance protein 3 homolog (820 aa).

Alanine 2 is subject to N-acetylalanine. Serine 32, serine 72, serine 77, serine 176, and serine 284 each carry phosphoserine. The tract at residues 40–81 is disordered; that stretch reads DAYQDVSIHGTLPRKKKGPPSIRSCDNAGHSKSPRQSSPLTQ. The 100-residue stretch at 148–247 folds into the SH2 domain; the sequence is WYHGRIPRQV…QSGAIIFQPI (100 aa). Lysine 329 carries the N6-methyllysine modification. Positions 346 to 367 are disordered; that stretch reads QSPSMDTSPCPSSPVFRTGSEP. Phosphoserine occurs at positions 353, 358, and 370. Arginine 437 bears the Omega-N-methylarginine mark. Phosphoserine is present on serine 466. Residues 543–813 form the Ras-GEF domain; the sequence is DARVIAQHML…TALSRKLEPP (271 aa). A mediates the interaction with BCAR1/p130CAS region spans residues 739–743; that stretch reads LATAR.

In terms of assembly, part of a complex comprised of PTPRA, BCAR1, BCAR3 (via SH2 domain) and SRC; the formation of the complex is dependent on integrin mediated-tyrosine phosphorylation of PTPRA. Within the complex, interacts (via SH2 domain) with PTPRA (when phosphorylated on 'Tyr-825'). Interacts (via Ras-GEF domain) with BCAR1. Interacts (via Ras-GEF domain) with NEDD9. Interacts with PTK2B/FAK1. Interacts with PTPN1. Interacts (via SH2 domain) with EGFR (when tyrosine-phosphorylated). In terms of processing, phosphorylated on tyrosine residues. Abundantly expressed in the lung and brain, with lower expression in splenic lymphocytes and liver (at protein level). Expressed in splenic lymphocytes (at protein level). Expressed in the lymph node cortical region, periphery of the splenic white pulp and in alveolar lung fibroblasts. Expressed in epithelial cells in the lens equatorial region and early stage nucleated cortical lens fiber cells. Expressed in the thymus. Expressed in B-cells.

Its subcellular location is the cytoplasm. It is found in the cell junction. The protein localises to the focal adhesion. Acts as an adapter protein downstream of several growth factor receptors to promote cell proliferation, migration, and redistribution of actin fibers. Specifically involved in INS/insulin signaling pathway by mediating MAPK1/ERK2-MAPK3/ERK1 activation and DNA synthesis. Promotes insulin-mediated membrane ruffling. In response to vasoconstrictor peptide EDN1, involved in the activation of RAP1 downstream of PTK2B via interaction with phosphorylated BCAR1. Inhibits cell migration and invasion via regulation of TGFB-mediated matrix digestion, actin filament rearrangement, and inhibition of invadopodia activity. May inhibit TGFB-SMAD signaling, via facilitating BCAR1 and SMAD2 and/or SMAD3 interaction. Regulates EGF-induced DNA synthesis. Required for the maintenance of ocular lens morphology and structural integrity, potentially via regulation of focal adhesion complex signaling. Acts upstream of PTPRA to regulate the localization of BCAR1 and PTPRA to focal adhesions, via regulation of SRC-mediated phosphorylation of PTPRA. Positively regulates integrin-induced tyrosine phosphorylation of BCAR1. Acts as a guanine nucleotide exchange factor (GEF) for small GTPases RALA, RAP1A and RRAS. However, in a contrasting study, lacks GEF activity towards RAP1. The chain is Breast cancer anti-estrogen resistance protein 3 homolog (Bcar3) from Mus musculus (Mouse).